The sequence spans 382 residues: Glucose-1-phosphate adenylyltransferase (382 aa).

Alpha-D-glucose 1-phosphate-binding positions include Tyr100, Gly165, 180–181 (EK), and Ser191.

This sequence belongs to the bacterial/plant glucose-1-phosphate adenylyltransferase family. In terms of assembly, homotetramer.

The enzyme catalyses alpha-D-glucose 1-phosphate + ATP + H(+) = ADP-alpha-D-glucose + diphosphate. The protein operates within glycan biosynthesis; glycogen biosynthesis. In terms of biological role, involved in the biosynthesis of ADP-glucose, a building block required for the elongation reactions to produce glycogen. Catalyzes the reaction between ATP and alpha-D-glucose 1-phosphate (G1P) to produce pyrophosphate and ADP-Glc. The sequence is that of Glucose-1-phosphate adenylyltransferase from Clostridium novyi (strain NT).